The following is a 337-amino-acid chain: Ornithine carbamoyltransferase (337 aa).

Residues 56–59 (STRT), Q83, R107, and 134–137 (HPTQ) each bind carbamoyl phosphate. Residues N168, D232, and 236–237 (SM) each bind L-ornithine. Carbamoyl phosphate is bound by residues 274–275 (CL) and R320.

Belongs to the aspartate/ornithine carbamoyltransferase superfamily. OTCase family.

Its subcellular location is the cytoplasm. It catalyses the reaction carbamoyl phosphate + L-ornithine = L-citrulline + phosphate + H(+). The protein operates within amino-acid biosynthesis; L-arginine biosynthesis; L-arginine from L-ornithine and carbamoyl phosphate: step 1/3. Reversibly catalyzes the transfer of the carbamoyl group from carbamoyl phosphate (CP) to the N(epsilon) atom of ornithine (ORN) to produce L-citrulline. In Shigella flexneri, this protein is Ornithine carbamoyltransferase (argI).